The chain runs to 204 residues: ATP phosphoribosyltransferase (204 aa).

It belongs to the ATP phosphoribosyltransferase family. Short subfamily. In terms of assembly, heteromultimer composed of HisG and HisZ subunits.

It localises to the cytoplasm. The enzyme catalyses 1-(5-phospho-beta-D-ribosyl)-ATP + diphosphate = 5-phospho-alpha-D-ribose 1-diphosphate + ATP. The protein operates within amino-acid biosynthesis; L-histidine biosynthesis; L-histidine from 5-phospho-alpha-D-ribose 1-diphosphate: step 1/9. In terms of biological role, catalyzes the condensation of ATP and 5-phosphoribose 1-diphosphate to form N'-(5'-phosphoribosyl)-ATP (PR-ATP). Has a crucial role in the pathway because the rate of histidine biosynthesis seems to be controlled primarily by regulation of HisG enzymatic activity. This is ATP phosphoribosyltransferase from Staphylococcus aureus (strain bovine RF122 / ET3-1).